Consider the following 688-residue polypeptide: PTS system glucoside-specific EIICBA component (688 aa).

Residues 3–427 enclose the PTS EIIC type-1 domain; that stretch reads KKLFGQLQRI…FKLKTPGRED (425 aa). The next 10 helical transmembrane spans lie at 12-32, 81-101, 137-157, 182-202, 223-243, 284-304, 315-335, 340-360, 364-384, and 395-415; these read IGKALMLPVAILPAAGILLAF, LGLAGGDGVAALAALVGYLIM, LVLGIPTLQTGVFGGIIMGAL, FVPIVTSVVAIATGVLLSFAW, LTTFIFGIIERSLIPFGLHHI, AFTTGKYPFMMFGLPAAAFAI, VVGGLMLSAGLTAFLTGITEP, FLFVAPVLYGIHVLLAGTSFL, LLGVKIGMTFSGGFIDYILYG, and LVIPVGIVYAIVYYFLFDFAI. A PTS EIIB type-1 domain is found at 438-519; sequence AKLPFDVLDA…AKIMSGEITK (82 aa). Catalysis depends on C460, which acts as the Phosphocysteine intermediate; for EIIB activity. The region spanning 560–664 is the PTS EIIA type-1 domain; the sequence is DQVFAGKMMG…SIVTPMIITN (105 aa). The active-site Tele-phosphohistidine intermediate; for EIIA activity is H612.

It localises to the cell membrane. Its function is as follows. The phosphoenolpyruvate-dependent sugar phosphotransferase system (sugar PTS), a major carbohydrate active -transport system, catalyzes the phosphorylation of incoming sugar substrates concomitantly with their translocation across the cell membrane. This system is involved in alpha- and beta-glucoside transport. The chain is PTS system glucoside-specific EIICBA component (glcB) from Staphylococcus aureus (strain USA300).